Here is a 207-residue protein sequence, read N- to C-terminus: Guanylate kinase (207 aa).

The region spanning 4-184 (GTLYIVSAPS…ALSDLKTIIR (181 aa)) is the Guanylate kinase-like domain. Residue 11–18 (APSGAGKS) participates in ATP binding.

Belongs to the guanylate kinase family.

Its subcellular location is the cytoplasm. The catalysed reaction is GMP + ATP = GDP + ADP. It catalyses the reaction dZMP + ATP = dZDP + ADP. It functions in the pathway purine metabolism. Essential for recycling GMP and indirectly, cGMP. Its function is as follows. (Microbial infection) Catalyzes the phosphorylation of dZMP to dZDP, when the bacterium is infected by a phage that produces the substrate for the synthesis of dZTP (2- amino-2'-deoxyadenosine 5'-triphosphate), which is then used by the phage as a DNA polymerase substrate. The polypeptide is Guanylate kinase (Salmonella choleraesuis (strain SC-B67)).